A 450-amino-acid chain; its full sequence is Probable ECA polymerase (450 aa).

11 helical membrane passes run 6-26 (FSGL…LTWF), 37-57 (VFFS…TSVL), 63-83 (VGVA…CFYA), 118-138 (VILM…NGFL), 155-175 (GVAL…VYFL), 181-201 (AWLF…MIVG), 207-227 (IIIA…ISLW), 228-248 (MLAA…LKRY), 341-361 (LVVM…GLII), 378-398 (YKAA…IVLA), and 410-430 (VFFI…YWLF).

It belongs to the WzyE family. As to quaternary structure, probably part of a complex composed of WzxE, WzyE and WzzE.

The protein resides in the cell inner membrane. It participates in bacterial outer membrane biogenesis; enterobacterial common antigen biosynthesis. In terms of biological role, probably involved in the polymerization of enterobacterial common antigen (ECA) trisaccharide repeat units. This chain is Probable ECA polymerase, found in Escherichia coli O127:H6 (strain E2348/69 / EPEC).